The primary structure comprises 363 residues: Bonnadiene synthase (363 aa).

5 residues coordinate Mg(2+): D93, D98, N234, S238, and E242.

It belongs to the terpene synthase family. Mg(2+) serves as cofactor.

It catalyses the reaction (2E,6E,10E)-geranylgeranyl diphosphate = bonnadiene + diphosphate. The protein operates within secondary metabolite biosynthesis; terpenoid biosynthesis. Its function is as follows. Diterpene synthase that catalyzes the conversion of geranylgeranyl diphosphate (GGPP) to bonnadiene. Cannot use geranyl diphosphate (GPP), farnesyl diphosphate (FPP) and geranylfarnesyl diphosphate (GFPP). The polypeptide is Bonnadiene synthase (Allokutzneria albata (Kibdelosporangium albatum)).